The chain runs to 359 residues: RNA-binding protein 4B (359 aa).

RRM domains are found at residues 2-72 (VKLF…ASKN) and 78-148 (TKLH…LSTS). The CCHC-type zinc-finger motif lies at 160–177 (SGCYRCGKEGHWSKECPV). Residues 196 to 359 (AVRPPYTMGY…YVDRARYSAF (164 aa)) are interaction with TNPO3.

In terms of assembly, interacts with TNPO3, which may mediate nuclear import of the protein.

Its subcellular location is the nucleus. The protein localises to the nucleolus. Functionally, required for the translational activation of PER1 mRNA in response to circadian clock. Binds directly to the 3'-UTR of the PER1 mRNA. The protein is RNA-binding protein 4B (RBM4B) of Sus scrofa (Pig).